Here is a 197-residue protein sequence, read N- to C-terminus: Molybdenum cofactor guanylyltransferase (197 aa).

GTP contacts are provided by residues 10–12 (LAG), K23, N51, D69, and D99. D99 is a Mg(2+) binding site.

Belongs to the MobA family. In terms of assembly, monomer. Mg(2+) serves as cofactor.

The protein resides in the cytoplasm. It carries out the reaction Mo-molybdopterin + GTP + H(+) = Mo-molybdopterin guanine dinucleotide + diphosphate. Functionally, transfers a GMP moiety from GTP to Mo-molybdopterin (Mo-MPT) cofactor (Moco or molybdenum cofactor) to form Mo-molybdopterin guanine dinucleotide (Mo-MGD) cofactor. This is Molybdenum cofactor guanylyltransferase from Shewanella sp. (strain ANA-3).